A 713-amino-acid chain; its full sequence is Peroxisomal biogenesis factor 8 (713 aa).

The segment at 1-31 (MYRLGSQGRSIQSQLQNGDSSSGRPLQLQGT) is disordered. Polar residues predominate over residues 7–30 (QGRSIQSQLQNGDSSSGRPLQLQG). Residues 711–713 (AKL) carry the Microbody targeting signal motif.

Interacts with PEX5 (via N-terminus).

It is found in the peroxisome membrane. Its function is as follows. Essential component of the machinery required for the import of both PTS1 and PTS2 (and perhaps all) peroxisomal matrix proteins. Binding of PEX8 to the N-terminus of PEX5 cargo receptor induces a conformational change of the TPR domains and decrease their binding affinity to cargo, facilitating the release of the PTS1 proteins within the peroxisome. The protein is Peroxisomal biogenesis factor 8 of Komagataella phaffii (strain GS115 / ATCC 20864) (Yeast).